A 153-amino-acid chain; its full sequence is Interleukin-4 (153 aa).

An N-terminal signal peptide occupies residues Met-1–Gly-24. Cystine bridges form between Cys-27-Cys-151, Cys-48-Cys-89, and Cys-70-Cys-123. N-linked (GlcNAc...) asparagine glycosylation is present at Asn-62.

The protein belongs to the IL-4/IL-13 family.

Its subcellular location is the secreted. Functionally, participates in at least several B-cell activation processes as well as of other cell types. It is a costimulator of DNA-synthesis. It induces the expression of class II MHC molecules on resting B-cells. It enhances both secretion and cell surface expression of IgE and IgG1. It also regulates the expression of the low affinity Fc receptor for IgE (CD23) on both lymphocytes and monocytes. Positively regulates IL31RA expression in macrophages. Stimulates autophagy in dendritic cells by interfering with mTORC1 signaling and through the induction of RUFY4. This Macaca fascicularis (Crab-eating macaque) protein is Interleukin-4 (IL4).